The chain runs to 533 residues: Probable bifunctional tRNA threonylcarbamoyladenosine biosynthesis protein (533 aa).

Residues 1-329 (MTRVLGIEGT…FRPDEVPVSW (329 aa)) form a kae1 region. Fe cation contacts are provided by H113 and H117. L-threonylcarbamoyladenylate contacts are provided by residues 134–138 (NASGA), D166, G179, E183, and N262. D290 is a Fe cation binding site. Residues 338–533 (PVPTDERRQG…REIETRGRYQ (196 aa)) form the Protein kinase domain. ATP contacts are provided by residues 345-352 (RQGAEAVV) and K363. D452 (proton acceptor; for kinase activity) is an active-site residue.

This sequence in the N-terminal section; belongs to the KAE1 / TsaD family. It in the C-terminal section; belongs to the protein kinase superfamily. Tyr protein kinase family. BUD32 subfamily. Component of the KEOPS complex that consists of Kae1, Bud32, Cgi121 and Pcc1; the whole complex dimerizes. The cofactor is Fe(2+).

It is found in the cytoplasm. It carries out the reaction L-seryl-[protein] + ATP = O-phospho-L-seryl-[protein] + ADP + H(+). It catalyses the reaction L-threonyl-[protein] + ATP = O-phospho-L-threonyl-[protein] + ADP + H(+). The enzyme catalyses L-threonylcarbamoyladenylate + adenosine(37) in tRNA = N(6)-L-threonylcarbamoyladenosine(37) in tRNA + AMP + H(+). Required for the formation of a threonylcarbamoyl group on adenosine at position 37 (t(6)A37) in tRNAs that read codons beginning with adenine. Is a component of the KEOPS complex that is probably involved in the transfer of the threonylcarbamoyl moiety of threonylcarbamoyl-AMP (TC-AMP) to the N6 group of A37. The Kae1 domain likely plays a direct catalytic role in this reaction. The Bud32 domain probably displays kinase activity that regulates Kae1 function. This is Probable bifunctional tRNA threonylcarbamoyladenosine biosynthesis protein from Natronomonas pharaonis (strain ATCC 35678 / DSM 2160 / CIP 103997 / JCM 8858 / NBRC 14720 / NCIMB 2260 / Gabara) (Halobacterium pharaonis).